Reading from the N-terminus, the 126-residue chain is Small ribosomal subunit protein uS12 (126 aa).

The tract at residues 1-28 is disordered; it reads MPTINQLVRKGRQSETTKSKSPALQDCP. Aspartate 89 carries the post-translational modification 3-methylthioaspartic acid. Residues 103–126 are disordered; that stretch reads DTQGVKDRKQARSKYGAKRAKAGK. A compositionally biased stretch (basic residues) spans 113–126; the sequence is ARSKYGAKRAKAGK.

It belongs to the universal ribosomal protein uS12 family. Part of the 30S ribosomal subunit. Contacts proteins S8 and S17. May interact with IF1 in the 30S initiation complex.

Its function is as follows. With S4 and S5 plays an important role in translational accuracy. Interacts with and stabilizes bases of the 16S rRNA that are involved in tRNA selection in the A site and with the mRNA backbone. Located at the interface of the 30S and 50S subunits, it traverses the body of the 30S subunit contacting proteins on the other side and probably holding the rRNA structure together. The combined cluster of proteins S8, S12 and S17 appears to hold together the shoulder and platform of the 30S subunit. This is Small ribosomal subunit protein uS12 from Paraburkholderia phytofirmans (strain DSM 17436 / LMG 22146 / PsJN) (Burkholderia phytofirmans).